A 306-amino-acid polypeptide reads, in one-letter code: Ribonuclease Z (306 aa).

Positions 63, 65, 67, 68, 140, 211, and 269 each coordinate Zn(2+). D67 serves as the catalytic Proton acceptor.

The protein belongs to the RNase Z family. Homodimer. Zn(2+) is required as a cofactor.

It catalyses the reaction Endonucleolytic cleavage of RNA, removing extra 3' nucleotides from tRNA precursor, generating 3' termini of tRNAs. A 3'-hydroxy group is left at the tRNA terminus and a 5'-phosphoryl group is left at the trailer molecule.. In terms of biological role, zinc phosphodiesterase, which displays some tRNA 3'-processing endonuclease activity. Probably involved in tRNA maturation, by removing a 3'-trailer from precursor tRNA. This is Ribonuclease Z from Listeria monocytogenes serotype 4a (strain HCC23).